Consider the following 99-residue polypeptide: Large ribosomal subunit protein bL28 (99 aa).

It belongs to the bacterial ribosomal protein bL28 family.

The chain is Large ribosomal subunit protein bL28 from Caulobacter vibrioides (strain ATCC 19089 / CIP 103742 / CB 15) (Caulobacter crescentus).